The primary structure comprises 172 residues: Transcription factor E (172 aa).

The 83-residue stretch at 8–90 (DDPVVQKYLH…LWTFQYENVP (83 aa)) folds into the HTH TFE/IIEalpha-type domain.

Belongs to the TFE family. Monomer. Interaction with RNA polymerase subunits RpoF and RpoE is necessary for Tfe stimulatory transcription activity. Able to interact with Tbp and RNA polymerase in the absence of DNA promoter. Interacts both with the preinitiation and elongation complexes.

Its function is as follows. Transcription factor that plays a role in the activation of archaeal genes transcribed by RNA polymerase. Facilitates transcription initiation by enhancing TATA-box recognition by TATA-box-binding protein (Tbp), and transcription factor B (Tfb) and RNA polymerase recruitment. Not absolutely required for transcription in vitro, but particularly important in cases where Tbp or Tfb function is not optimal. It dynamically alters the nucleic acid-binding properties of RNA polymerases by stabilizing the initiation complex and destabilizing elongation complexes. Seems to translocate with the RNA polymerase following initiation and acts by binding to the non template strand of the transcription bubble in elongation complexes. In Halobacterium salinarum (strain ATCC 700922 / JCM 11081 / NRC-1) (Halobacterium halobium), this protein is Transcription factor E.